Here is a 394-residue protein sequence, read N- to C-terminus: Phosphoglycerate kinase (394 aa).

Residues 21 to 23, R36, 59 to 62, R118, and R151 each bind substrate; these read DFN and HLGR. S183 carries the phosphoserine modification. K201 is an ATP binding site. The residue at position 299 (T299) is a Phosphothreonine. ATP-binding positions include E323 and 350 to 353; that span reads GGDS.

It belongs to the phosphoglycerate kinase family. In terms of assembly, monomer.

The protein localises to the cytoplasm. It carries out the reaction (2R)-3-phosphoglycerate + ATP = (2R)-3-phospho-glyceroyl phosphate + ADP. The protein operates within carbohydrate degradation; glycolysis; pyruvate from D-glyceraldehyde 3-phosphate: step 2/5. The polypeptide is Phosphoglycerate kinase (Geobacillus kaustophilus (strain HTA426)).